The chain runs to 395 residues: tRNA-specific 2-thiouridylase MnmA (395 aa).

Residues 7 to 14 and Met33 contribute to the ATP site; that span reads GLSGGVDS. The tract at residues 95–97 is interaction with target base in tRNA; the sequence is NPD. The Nucleophile role is filled by Cys100. An intrachain disulfide couples Cys100 to Cys200. Gly124 is an ATP binding site. Positions 150–152 are interaction with tRNA; it reads KDQ. Cys200 serves as the catalytic Cysteine persulfide intermediate. The segment at 346–347 is interaction with tRNA; the sequence is RY.

Belongs to the MnmA/TRMU family.

Its subcellular location is the cytoplasm. It carries out the reaction S-sulfanyl-L-cysteinyl-[protein] + uridine(34) in tRNA + AH2 + ATP = 2-thiouridine(34) in tRNA + L-cysteinyl-[protein] + A + AMP + diphosphate + H(+). Functionally, catalyzes the 2-thiolation of uridine at the wobble position (U34) of tRNA, leading to the formation of s(2)U34. This is tRNA-specific 2-thiouridylase MnmA from Christiangramia forsetii (strain DSM 17595 / CGMCC 1.15422 / KT0803) (Gramella forsetii).